A 153-amino-acid polypeptide reads, in one-letter code: Endoribonuclease YbeY (153 aa).

Positions 118, 122, and 128 each coordinate Zn(2+).

It belongs to the endoribonuclease YbeY family. Requires Zn(2+) as cofactor.

It localises to the cytoplasm. Single strand-specific metallo-endoribonuclease involved in late-stage 70S ribosome quality control and in maturation of the 3' terminus of the 16S rRNA. The sequence is that of Endoribonuclease YbeY from Pelagibacter ubique (strain HTCC1062).